The following is a 591-amino-acid chain: V-type ATP synthase alpha chain (591 aa).

Position 233–240 (233–240 (GPFGAGKT)) interacts with ATP.

It belongs to the ATPase alpha/beta chains family.

The enzyme catalyses ATP + H2O + 4 H(+)(in) = ADP + phosphate + 5 H(+)(out). Produces ATP from ADP in the presence of a proton gradient across the membrane. The V-type alpha chain is a catalytic subunit. The sequence is that of V-type ATP synthase alpha chain from Streptococcus pyogenes serotype M18 (strain MGAS8232).